The following is a 179-amino-acid chain: Apoptosis regulator Bcl-2 homolog (179 aa).

The BH1 signature appears at Glu76–Ala95. A BH2 motif is present at residues Pro126 to Ser141.

The protein belongs to the Bcl-2 family. As to quaternary structure, interacts with host BECN1 (via BH3 homology domain); this interaction allows the virus to inhibit BECN1, and thus autophagy. Interacts with host BID. Interacts with host BAX.

The protein resides in the host mitochondrion. The protein localises to the host endoplasmic reticulum. Its function is as follows. Suppresses apoptosis in host cell to promote the viral replication. Has the ability to potentially bind to all the members of the proapoptotic Bcl-2 family. Inhibits autophagy by interacting with host Beclin 1 (BECN1). The polypeptide is Apoptosis regulator Bcl-2 homolog (African swine fever virus (isolate Tick/South Africa/Pretoriuskop Pr4/1996) (ASFV)).